The following is a 136-amino-acid chain: MKKSNFSNVNLSMGTGRRKSSVARVYIREGSGNIKVNNRDFDSYIQLENLRTMALSPLVLTNTLGKYDLYINVYGGGISGQSGAIRHGISRALFELDESNKMILRSNGFLTRDSRKVERKKFGQKKARKSFQFSKR.

It belongs to the universal ribosomal protein uS9 family.

This chain is Small ribosomal subunit protein uS9, found in Borreliella afzelii (strain PKo) (Borrelia afzelii).